The following is a 2532-amino-acid chain: Lovastatin diketide synthase lovF (2532 aa).

The Ketosynthase family 3 (KS3) domain maps to 10–430 (PAPIAMVGMG…GANAHAIVEQ (421 aa)). Active-site for beta-ketoacyl synthase activity residues include Cys-183, His-318, and His-353. Residues 545–870 (VFTGQGAQWF…PYLSCLSRGK (326 aa)) are malonyl-CoA:ACP transacylase (MAT) domain. The active-site For malonyltransferase activity is the Ser-635. Positions 941-1078 (HDLIGLQEPL…GLVRAEMDQP (138 aa)) are N-terminal hotdog fold. Residues 941–1246 (HDLIGLQEPL…LEGLVFQSLG (306 aa)) are dehydratase (DH) domain. Residues 941–1251 (HDLIGLQEPL…FQSLGASLGT (311 aa)) form the PKS/mFAS DH domain. His-973 (proton acceptor; for dehydratase activity) is an active-site residue. Residues 1075–1094 (MDQPPSSLSNQQRIDPRPWS) are disordered. A compositionally biased stretch (polar residues) spans 1078–1087 (PPSSLSNQQR). A C-terminal hotdog fold region spans residues 1092–1251 (PWSRKTAPQE…FQSLGASLGT (160 aa)). The active-site Proton donor; for dehydratase activity is Asp-1159. Positions 1423-1607 (ELVRLCCHKN…ARDCDSHEFY (185 aa)) are methyltransferase (CMet) domain. Residues 1825-2144 (GLLDSLHFTK…SGQHVGKIVV (320 aa)) are enoylreductase (ER) domain. Residues 2168–2340 (SYLVAGGLGG…AVTIDLGMVQ (173 aa)) are ketoreductase (KR) domain. Residues 2453–2530 (ESIAVIMEAM…KVAEVVLQRY (78 aa)) form the Carrier domain. At Ser-2490 the chain carries O-(pantetheine 4'-phosphoryl)serine.

In terms of assembly, interacts with LovD. Requires pantetheine 4'-phosphate as cofactor.

The catalysed reaction is holo-[2-methylbutanoate polyketide synthase] + 2 malonyl-CoA + S-adenosyl-L-methionine + 2 NADPH + 3 H(+) = (S)-2-methylbutanoyl-[2-methylbutanoate polyketide synthase] + S-adenosyl-L-homocysteine + 2 CO2 + 2 NADP(+) + 2 CoA + H2O. Its pathway is polyketide biosynthesis; lovastatin biosynthesis. Its function is as follows. Lovastatin diketide synthase; part of the gene cluster that mediates the biosynthesis of lovastatin (also known as mevinolin, mevacor or monacolin K), a hypolipidemic inhibitor of (3S)-hydroxymethylglutaryl-coenzyme A (HMG-CoA) reductase (HMGR). The first step in the biosynthesis of lovastatin is the production of dihydromonacolin L acid by the lovastatin nonaketide synthase lovB and the trans-acting enoyl reductase lovC via condensation of one acetyl-CoA unit and 8 malonyl-CoA units. Dihydromonacolin L acid is released from lovB by the thioesterase lovG. Next, dihydromonacolin L acid is oxidized by the dihydromonacolin L monooxygenase lovA twice to form monacolin J acid. The 2-methylbutyrate moiety of lovastatin is synthesized by the lovastatin diketide synthase lovF via condensation of one acetyl-CoA unit and one malonyl-CoA unit. Finally, the covalent attachment of this moiety to monacolin J acid is catalyzed by the transesterase lovD to yield lovastatin. LovD has broad substrate specificity and can also convert monacolin J to simvastatin using alpha-dimethylbutanoyl-S-methyl-3-mercaptopropionate (DMB-S-MMP) as the thioester acyl donor, and can also catalyze the reverse reaction and function as hydrolase in vitro. LovD has much higher activity with LovF-bound 2-methylbutanoate than with free diketide substrates. The chain is Lovastatin diketide synthase lovF from Aspergillus terreus.